We begin with the raw amino-acid sequence, 430 residues long: tRNA-2-methylthio-N(6)-dimethylallyladenosine synthase (430 aa).

The MTTase N-terminal domain occupies M1–N110. [4Fe-4S] cluster-binding residues include C10, C46, C75, C146, C150, and C153. Residues R132–E363 enclose the Radical SAM core domain. The TRAM domain maps to K366–K427.

The protein belongs to the methylthiotransferase family. MiaB subfamily. Monomer. It depends on [4Fe-4S] cluster as a cofactor.

It localises to the cytoplasm. It catalyses the reaction N(6)-dimethylallyladenosine(37) in tRNA + (sulfur carrier)-SH + AH2 + 2 S-adenosyl-L-methionine = 2-methylsulfanyl-N(6)-dimethylallyladenosine(37) in tRNA + (sulfur carrier)-H + 5'-deoxyadenosine + L-methionine + A + S-adenosyl-L-homocysteine + 2 H(+). Catalyzes the methylthiolation of N6-(dimethylallyl)adenosine (i(6)A), leading to the formation of 2-methylthio-N6-(dimethylallyl)adenosine (ms(2)i(6)A) at position 37 in tRNAs that read codons beginning with uridine. This is tRNA-2-methylthio-N(6)-dimethylallyladenosine synthase from Fervidobacterium nodosum (strain ATCC 35602 / DSM 5306 / Rt17-B1).